A 378-amino-acid polypeptide reads, in one-letter code: Putative glutamate--cysteine ligase 2 (378 aa).

The protein belongs to the glutamate--cysteine ligase type 2 family. YbdK subfamily.

It catalyses the reaction L-cysteine + L-glutamate + ATP = gamma-L-glutamyl-L-cysteine + ADP + phosphate + H(+). In terms of biological role, ATP-dependent carboxylate-amine ligase which exhibits weak glutamate--cysteine ligase activity. The protein is Putative glutamate--cysteine ligase 2 of Leifsonia xyli subsp. xyli (strain CTCB07).